A 358-amino-acid chain; its full sequence is Sulfoquinovosyl glycerol transport ATP-binding protein SmoE (358 aa).

Residues 4-234 form the ABC transporter domain; the sequence is VSLRKLDKSY…PESVFVGGFV (231 aa). Residue 36 to 43 coordinates ATP; that stretch reads GPSGCGKS.

This sequence belongs to the ABC transporter superfamily. In terms of assembly, the complex is probably composed of two ATP-binding proteins (SmoE), two transmembrane proteins (SmoG and SmoH) and a solute-binding protein (SmoF).

The protein resides in the cell inner membrane. Its function is as follows. Part of the ABC transporter complex SmoEFGH involved in sulfoquinovosyl glycerol (SQGro) uptake. Responsible for energy coupling to the transport system. The polypeptide is Sulfoquinovosyl glycerol transport ATP-binding protein SmoE (Agrobacterium fabrum (strain C58 / ATCC 33970) (Agrobacterium tumefaciens (strain C58))).